Consider the following 149-residue polypeptide: Large ribosomal subunit protein bL9 (149 aa).

The protein belongs to the bacterial ribosomal protein bL9 family.

Functionally, binds to the 23S rRNA. This Legionella pneumophila subsp. pneumophila (strain Philadelphia 1 / ATCC 33152 / DSM 7513) protein is Large ribosomal subunit protein bL9.